Here is a 749-residue protein sequence, read N- to C-terminus: Catalase-peroxidase (749 aa).

Residues Trp-98–Tyr-234 constitute a cross-link (tryptophyl-tyrosyl-methioninium (Trp-Tyr) (with M-260)). His-99 acts as the Proton acceptor in catalysis. A cross-link (tryptophyl-tyrosyl-methioninium (Tyr-Met) (with W-98)) is located at residues Tyr-234–Met-260. His-275 lines the heme b pocket.

This sequence belongs to the peroxidase family. Peroxidase/catalase subfamily. As to quaternary structure, homodimer or homotetramer. Heme b is required as a cofactor. Post-translationally, formation of the three residue Trp-Tyr-Met cross-link is important for the catalase, but not the peroxidase activity of the enzyme.

Its subcellular location is the cytoplasm. The enzyme catalyses H2O2 + AH2 = A + 2 H2O. It carries out the reaction 2 H2O2 = O2 + 2 H2O. Its function is as follows. Bifunctional enzyme with both catalase and broad-spectrum peroxidase activity. The sequence is that of Catalase-peroxidase from Mycosarcoma maydis (Corn smut fungus).